A 577-amino-acid chain; its full sequence is Arginine--tRNA ligase (577 aa).

The 'HIGH' region motif lies at 122-132; sequence PNVAKEMHVGH.

Belongs to the class-I aminoacyl-tRNA synthetase family. In terms of assembly, monomer.

The protein localises to the cytoplasm. It catalyses the reaction tRNA(Arg) + L-arginine + ATP = L-arginyl-tRNA(Arg) + AMP + diphosphate. The chain is Arginine--tRNA ligase from Vibrio parahaemolyticus serotype O3:K6 (strain RIMD 2210633).